Reading from the N-terminus, the 360-residue chain is Peptide chain release factor 1 (360 aa).

N5-methylglutamine is present on glutamine 235.

Belongs to the prokaryotic/mitochondrial release factor family. Post-translationally, methylated by PrmC. Methylation increases the termination efficiency of RF1.

The protein resides in the cytoplasm. Its function is as follows. Peptide chain release factor 1 directs the termination of translation in response to the peptide chain termination codons UAG and UAA. This chain is Peptide chain release factor 1, found in Burkholderia thailandensis (strain ATCC 700388 / DSM 13276 / CCUG 48851 / CIP 106301 / E264).